A 123-amino-acid polypeptide reads, in one-letter code: Large ribosomal subunit protein uL14c (123 aa).

Belongs to the universal ribosomal protein uL14 family. As to quaternary structure, part of the 50S ribosomal subunit.

It localises to the plastid. It is found in the chloroplast. In terms of biological role, binds to 23S rRNA. The chain is Large ribosomal subunit protein uL14c from Sorghum bicolor (Sorghum).